A 144-amino-acid chain; its full sequence is Large ribosomal subunit protein uL15 (144 aa).

Positions 1–54 (MRLNTIKPGEGSKKTAKRVGRGIGSGLGKTCGRGHKGQKSRSGGFHKVGFEGGQ) are disordered. Residues 21–31 (RGIGSGLGKTC) are compositionally biased toward gly residues.

This sequence belongs to the universal ribosomal protein uL15 family. Part of the 50S ribosomal subunit.

In terms of biological role, binds to the 23S rRNA. This Dechloromonas aromatica (strain RCB) protein is Large ribosomal subunit protein uL15.